The sequence spans 403 residues: Argininosuccinate synthase (403 aa).

ATP-binding positions include 10 to 18 and Ala-38; that span reads AYSGGVDTS. Tyr-89 provides a ligand contact to L-citrulline. Residue Gly-119 coordinates ATP. The L-aspartate site is built by Thr-121, Asn-125, and Asp-126. Asn-125 is a binding site for L-citrulline. Positions 129, 177, 186, 262, and 274 each coordinate L-citrulline.

Belongs to the argininosuccinate synthase family. Type 1 subfamily. As to quaternary structure, homotetramer.

The protein resides in the cytoplasm. It carries out the reaction L-citrulline + L-aspartate + ATP = 2-(N(omega)-L-arginino)succinate + AMP + diphosphate + H(+). The protein operates within amino-acid biosynthesis; L-arginine biosynthesis; L-arginine from L-ornithine and carbamoyl phosphate: step 2/3. In Synechococcus sp. (strain CC9605), this protein is Argininosuccinate synthase.